The primary structure comprises 211 residues: tRNA (guanosine(18)-2'-O)-methyltransferase (211 aa).

3 residues coordinate S-adenosyl-L-methionine: threonine 103, isoleucine 146, and leucine 155.

It belongs to the class IV-like SAM-binding methyltransferase superfamily. RNA methyltransferase TrmH family. As to quaternary structure, homodimer.

It carries out the reaction guanosine(18) in tRNA + S-adenosyl-L-methionine = 2'-O-methylguanosine(18) in tRNA + S-adenosyl-L-homocysteine + H(+). Catalyzes the 2'-O methylation of guanosine at position 18 in tRNA. Type II methylase, which methylates only a subset of tRNA species. This is tRNA (guanosine(18)-2'-O)-methyltransferase from Aquifex aeolicus (strain VF5).